The primary structure comprises 374 residues: Lactoyl-CoA dehydratase subunit beta (374 aa).

This sequence belongs to the FldB/FldC dehydratase alpha/beta subunit family. As to quaternary structure, heterodimer of an alpha (LcdA) and a beta (LcdB) subunit. It depends on [4Fe-4S] cluster as a cofactor. FMN is required as a cofactor. Requires riboflavin as cofactor. The cofactor is Mg(2+).

It catalyses the reaction (R)-lactoyl-CoA = acryloyl-CoA + H2O. The enzyme catalyses (2R)-hydroxybutanoyl-CoA = (2E)-butenoyl-CoA + H2O. Its activity is regulated as follows. Activated by the LcdC protein. In terms of biological role, involved in the acrylate pathway for the conversion of D-lactic acid to propionic acid. Catalyzes the reversible dehydration of Lactoyl-CoA and 2-hydroxybutyroyl-CoA to acryloyl-CoA and crotonyl-CoA, respectively. The chain is Lactoyl-CoA dehydratase subunit beta (lcdB) from Anaerotignum propionicum (Clostridium propionicum).